The primary structure comprises 340 residues: Holliday junction branch migration complex subunit RuvB (340 aa).

The large ATPase domain (RuvB-L) stretch occupies residues 4–184 (TDRIVGGQSL…FGIVQRLEFY (181 aa)). ATP contacts are provided by residues R24, G65, K68, T69, T70, 131–133 (EDF), R174, Y184, and R221. T69 is a Mg(2+) binding site. Residues 185 to 255 (SIEELAQIVT…IADLALNLLE (71 aa)) are small ATPAse domain (RuvB-S). A head domain (RuvB-H) region spans residues 258–340 (PLGLDKMDRR…TMPERNLEDE (83 aa)). The DNA site is built by R294, R313, and R318.

It belongs to the RuvB family. Homohexamer. Forms an RuvA(8)-RuvB(12)-Holliday junction (HJ) complex. HJ DNA is sandwiched between 2 RuvA tetramers; dsDNA enters through RuvA and exits via RuvB. An RuvB hexamer assembles on each DNA strand where it exits the tetramer. Each RuvB hexamer is contacted by two RuvA subunits (via domain III) on 2 adjacent RuvB subunits; this complex drives branch migration. In the full resolvosome a probable DNA-RuvA(4)-RuvB(12)-RuvC(2) complex forms which resolves the HJ.

It is found in the cytoplasm. The enzyme catalyses ATP + H2O = ADP + phosphate + H(+). In terms of biological role, the RuvA-RuvB-RuvC complex processes Holliday junction (HJ) DNA during genetic recombination and DNA repair, while the RuvA-RuvB complex plays an important role in the rescue of blocked DNA replication forks via replication fork reversal (RFR). RuvA specifically binds to HJ cruciform DNA, conferring on it an open structure. The RuvB hexamer acts as an ATP-dependent pump, pulling dsDNA into and through the RuvAB complex. RuvB forms 2 homohexamers on either side of HJ DNA bound by 1 or 2 RuvA tetramers; 4 subunits per hexamer contact DNA at a time. Coordinated motions by a converter formed by DNA-disengaged RuvB subunits stimulates ATP hydrolysis and nucleotide exchange. Immobilization of the converter enables RuvB to convert the ATP-contained energy into a lever motion, pulling 2 nucleotides of DNA out of the RuvA tetramer per ATP hydrolyzed, thus driving DNA branch migration. The RuvB motors rotate together with the DNA substrate, which together with the progressing nucleotide cycle form the mechanistic basis for DNA recombination by continuous HJ branch migration. Branch migration allows RuvC to scan DNA until it finds its consensus sequence, where it cleaves and resolves cruciform DNA. The protein is Holliday junction branch migration complex subunit RuvB of Hydrogenovibrio crunogenus (strain DSM 25203 / XCL-2) (Thiomicrospira crunogena).